Here is a 243-residue protein sequence, read N- to C-terminus: Carboxy-S-adenosyl-L-methionine synthase (243 aa).

S-adenosyl-L-methionine contacts are provided by residues Tyr-40, 65–67 (GCS), 90–91 (DN), 118–119 (DI), Asn-133, and Arg-200.

It belongs to the class I-like SAM-binding methyltransferase superfamily. Cx-SAM synthase family. In terms of assembly, homodimer.

The enzyme catalyses prephenate + S-adenosyl-L-methionine = carboxy-S-adenosyl-L-methionine + 3-phenylpyruvate + H2O. Its function is as follows. Catalyzes the conversion of S-adenosyl-L-methionine (SAM) to carboxy-S-adenosyl-L-methionine (Cx-SAM). In Shewanella amazonensis (strain ATCC BAA-1098 / SB2B), this protein is Carboxy-S-adenosyl-L-methionine synthase.